The primary structure comprises 450 residues: Chromosomal replication initiator protein DnaA (450 aa).

A domain I, interacts with DnaA modulators region spans residues M1 to Q84. Residues Q84–S111 form a domain II region. The interval M112–S328 is domain III, AAA+ region. ATP contacts are provided by G156, G158, K159, and T160. The interval S329–L450 is domain IV, binds dsDNA.

Belongs to the DnaA family. In terms of assembly, oligomerizes as a right-handed, spiral filament on DNA at oriC.

The protein resides in the cytoplasm. In terms of biological role, plays an essential role in the initiation and regulation of chromosomal replication. ATP-DnaA binds to the origin of replication (oriC) to initiate formation of the DNA replication initiation complex once per cell cycle. Binds the DnaA box (a 9 base pair repeat at the origin) and separates the double-stranded (ds)DNA. Forms a right-handed helical filament on oriC DNA; dsDNA binds to the exterior of the filament while single-stranded (ss)DNA is stabiized in the filament's interior. The ATP-DnaA-oriC complex binds and stabilizes one strand of the AT-rich DNA unwinding element (DUE), permitting loading of DNA polymerase. After initiation quickly degrades to an ADP-DnaA complex that is not apt for DNA replication. Binds acidic phospholipids. This is Chromosomal replication initiator protein DnaA from Geobacillus thermodenitrificans (strain NG80-2).